Here is a 293-residue protein sequence, read N- to C-terminus: Pyridoxal 5'-phosphate synthase subunit PdxS (293 aa).

Aspartate 23 lines the D-ribose 5-phosphate pocket. Catalysis depends on lysine 80, which acts as the Schiff-base intermediate with D-ribose 5-phosphate. Residue glycine 152 participates in D-ribose 5-phosphate binding. Arginine 164 is a binding site for D-glyceraldehyde 3-phosphate. Residues glycine 213 and 234 to 235 (GS) contribute to the D-ribose 5-phosphate site.

It belongs to the PdxS/SNZ family. As to quaternary structure, in the presence of PdxT, forms a dodecamer of heterodimers.

The catalysed reaction is aldehydo-D-ribose 5-phosphate + D-glyceraldehyde 3-phosphate + L-glutamine = pyridoxal 5'-phosphate + L-glutamate + phosphate + 3 H2O + H(+). The protein operates within cofactor biosynthesis; pyridoxal 5'-phosphate biosynthesis. Functionally, catalyzes the formation of pyridoxal 5'-phosphate from ribose 5-phosphate (RBP), glyceraldehyde 3-phosphate (G3P) and ammonia. The ammonia is provided by the PdxT subunit. Can also use ribulose 5-phosphate and dihydroxyacetone phosphate as substrates, resulting from enzyme-catalyzed isomerization of RBP and G3P, respectively. The protein is Pyridoxal 5'-phosphate synthase subunit PdxS of Thermus thermophilus (strain ATCC BAA-163 / DSM 7039 / HB27).